A 183-amino-acid polypeptide reads, in one-letter code: Tumor necrosis factor ligand superfamily member 4 (183 aa).

The Cytoplasmic portion of the chain corresponds to 1 to 23; the sequence is MERVQPLEENVGNAARPRFERNK. A helical; Signal-anchor for type II membrane protein transmembrane segment spans residues 24 to 50; that stretch reads LLLVASVIQGLGLLLCFTYICLHFSAL. Residues 51-173 enclose the THD domain; it reads QVSHRYPRIQ…HVNGGELILI (123 aa). Residues 51 to 183 lie on the Extracellular side of the membrane; that stretch reads QVSHRYPRIQ…HQNPGEFCVL (133 aa). Asparagine 90, asparagine 114, asparagine 152, and asparagine 157 each carry an N-linked (GlcNAc...) asparagine glycan. Cysteines 97 and 181 form a disulfide.

It belongs to the tumor necrosis factor family. As to quaternary structure, homotrimer.

Its subcellular location is the membrane. Functionally, cytokine that binds to TNFRSF4. Co-stimulates T-cell proliferation and cytokine production. In Homo sapiens (Human), this protein is Tumor necrosis factor ligand superfamily member 4 (TNFSF4).